The sequence spans 638 residues: MKVLAPGYLAEASLTALASGCQALSTRPYVPRGYSLSRRNDSTPIYKDASYCIDERVDDLLARMTIEEKAGQLFHTRLMDGPLDDEGSGNNAHNSTSNMIGEKHMTHFNLASDITNATETAEFINRIQELALQTRLGIPVTVSTDPRHSFTENVGTGFKAGVFSQWPESIGLAALRDPYVVRKFAEVAKEEYIAVGIRAALHPQVDLSTEPRWARISNTWGENSTLTSELLVEYIKGFQGDKLGPQSVKTVTKHFPGGGPVENGEDSHFAYGKNQTYPGNNLEEHLKPFKAAIAAGATEIMPYYSRPIGTEYEPVAFSFNKRIVTELLRNELGFDGIVLTDWGLITDGYIAGQYMPARAWGVENLTELQRAARILDAGCDQFGGEERPELIVQLVQEGIISEDRIDVSVRRLLKEKFVLGLFDNPFVDAEAAGRVVGNDYFVRLGREAQRRSYTLLSNNEDIVPLKKIEKSTKFYIEGFNASFIESWNYTVVDSPEEAEYALLRYNAPYEPRPGGFEANMHAGSLAFNDTEKARQAKIYSAVPTIVDIVMDRPAVIPEIIEQAKAVFASYGSDSNAFLDVVFGVSAPEGKLPFDLPSSMEAVEAQMEDVPFDTRNPVFKFGHGLSYANPCASSSSKCS.

The signal sequence occupies residues 1–18 (MKVLAPGYLAEASLTALA). N-linked (GlcNAc...) asparagine glycans are attached at residues N40, N94, N116, N223, and N274. D341 is a catalytic residue. Residues N364, N480, N488, and N528 are each glycosylated (N-linked (GlcNAc...) asparagine).

This sequence belongs to the glycosyl hydrolase 3 family.

The protein localises to the secreted. It carries out the reaction Hydrolysis of terminal, non-reducing beta-D-glucosyl residues with release of beta-D-glucose.. The protein operates within glycan metabolism; cellulose degradation. Beta-glucosidases are one of a number of cellulolytic enzymes involved in the degradation of cellulosic biomass. Catalyzes the last step releasing glucose from the inhibitory cellobiose. This Aspergillus oryzae (strain ATCC 42149 / RIB 40) (Yellow koji mold) protein is Probable beta-glucosidase C (bglC).